The chain runs to 216 residues: Somatotropin (216 aa).

Residues 1-26 (MAAGPRTSVLLAFGLLCLPWPQDVGA) form the signal peptide. A Zn(2+)-binding site is contributed by histidine 45. Cysteine 78 and cysteine 189 form a disulfide bridge. Serine 131 bears the Phosphoserine mark. Zn(2+) is bound at residue glutamate 198. Cysteine 206 and cysteine 214 are disulfide-bonded.

Belongs to the somatotropin/prolactin family.

It localises to the secreted. Plays an important role in growth control. Its major role in stimulating body growth is to stimulate the liver and other tissues to secrete IGF1. It stimulates both the differentiation and proliferation of myoblasts. It also stimulates amino acid uptake and protein synthesis in muscle and other tissues. This Equus caballus (Horse) protein is Somatotropin (GH1).